Reading from the N-terminus, the 296-residue chain is Cholesterol ring-cleaving hydrolase IpdA subunit (296 aa).

The protein belongs to the 3-oxoacid CoA-transferase subunit A family. Heterotetramer composed of 2 IpdA subunits and 2 IpdB subunits.

The catalysed reaction is (3E)-2-(2-carboxylatoethyl)-3-methyl-6-oxocyclohex-1-ene-1-carboxyl-CoA + H2O = 6-methyl-3,7-dioxodecanedioyl-CoA. The protein operates within steroid metabolism; cholesterol degradation. In terms of biological role, involved in the final steps of cholesterol and steroid degradation. Opens the last steroid ring of cholesterol by catalyzing the hydrolysis of (3E)-2-(2-carboxylatoethyl)-3-methyl-6-oxocyclohex-1-ene-1-carboxyl-CoA (COCHEA-CoA) to 6-methyl-3,7-dioxodecanedioyl-CoA (MeDODA-CoA). This Rhodococcus jostii (strain RHA1) protein is Cholesterol ring-cleaving hydrolase IpdA subunit.